Here is a 572-residue protein sequence, read N- to C-terminus: Proline--tRNA ligase (572 aa).

Belongs to the class-II aminoacyl-tRNA synthetase family. ProS type 1 subfamily. In terms of assembly, homodimer.

The protein resides in the cytoplasm. The enzyme catalyses tRNA(Pro) + L-proline + ATP = L-prolyl-tRNA(Pro) + AMP + diphosphate. Its function is as follows. Catalyzes the attachment of proline to tRNA(Pro) in a two-step reaction: proline is first activated by ATP to form Pro-AMP and then transferred to the acceptor end of tRNA(Pro). As ProRS can inadvertently accommodate and process non-cognate amino acids such as alanine and cysteine, to avoid such errors it has two additional distinct editing activities against alanine. One activity is designated as 'pretransfer' editing and involves the tRNA(Pro)-independent hydrolysis of activated Ala-AMP. The other activity is designated 'posttransfer' editing and involves deacylation of mischarged Ala-tRNA(Pro). The misacylated Cys-tRNA(Pro) is not edited by ProRS. The polypeptide is Proline--tRNA ligase (Shigella dysenteriae serotype 1 (strain Sd197)).